The chain runs to 296 residues: Phosphatidylserine decarboxylase proenzyme (296 aa).

Active-site charge relay system; for autoendoproteolytic cleavage activity residues include aspartate 113, histidine 169, and serine 256. Serine 256 (schiff-base intermediate with substrate; via pyruvic acid; for decarboxylase activity) is an active-site residue. A Pyruvic acid (Ser); by autocatalysis modification is found at serine 256.

It belongs to the phosphatidylserine decarboxylase family. PSD-B subfamily. Prokaryotic type II sub-subfamily. In terms of assembly, heterodimer of a large membrane-associated beta subunit and a small pyruvoyl-containing alpha subunit. Pyruvate is required as a cofactor. Post-translationally, is synthesized initially as an inactive proenzyme. Formation of the active enzyme involves a self-maturation process in which the active site pyruvoyl group is generated from an internal serine residue via an autocatalytic post-translational modification. Two non-identical subunits are generated from the proenzyme in this reaction, and the pyruvate is formed at the N-terminus of the alpha chain, which is derived from the carboxyl end of the proenzyme. The autoendoproteolytic cleavage occurs by a canonical serine protease mechanism, in which the side chain hydroxyl group of the serine supplies its oxygen atom to form the C-terminus of the beta chain, while the remainder of the serine residue undergoes an oxidative deamination to produce ammonia and the pyruvoyl prosthetic group on the alpha chain. During this reaction, the Ser that is part of the protease active site of the proenzyme becomes the pyruvoyl prosthetic group, which constitutes an essential element of the active site of the mature decarboxylase.

It localises to the cell membrane. The catalysed reaction is a 1,2-diacyl-sn-glycero-3-phospho-L-serine + H(+) = a 1,2-diacyl-sn-glycero-3-phosphoethanolamine + CO2. It functions in the pathway phospholipid metabolism; phosphatidylethanolamine biosynthesis; phosphatidylethanolamine from CDP-diacylglycerol: step 2/2. Its function is as follows. Catalyzes the formation of phosphatidylethanolamine (PtdEtn) from phosphatidylserine (PtdSer). This is Phosphatidylserine decarboxylase proenzyme from Clostridium botulinum (strain Eklund 17B / Type B).